A 248-amino-acid polypeptide reads, in one-letter code: Leucyl/phenylalanyl-tRNA--protein transferase (248 aa).

The protein belongs to the L/F-transferase family.

It localises to the cytoplasm. It carries out the reaction N-terminal L-lysyl-[protein] + L-leucyl-tRNA(Leu) = N-terminal L-leucyl-L-lysyl-[protein] + tRNA(Leu) + H(+). The enzyme catalyses N-terminal L-arginyl-[protein] + L-leucyl-tRNA(Leu) = N-terminal L-leucyl-L-arginyl-[protein] + tRNA(Leu) + H(+). It catalyses the reaction L-phenylalanyl-tRNA(Phe) + an N-terminal L-alpha-aminoacyl-[protein] = an N-terminal L-phenylalanyl-L-alpha-aminoacyl-[protein] + tRNA(Phe). Functions in the N-end rule pathway of protein degradation where it conjugates Leu, Phe and, less efficiently, Met from aminoacyl-tRNAs to the N-termini of proteins containing an N-terminal arginine or lysine. This chain is Leucyl/phenylalanyl-tRNA--protein transferase, found in Ralstonia pickettii (strain 12J).